Reading from the N-terminus, the 350-residue chain is Casein kinase II subunit alpha' (350 aa).

Phosphotyrosine is present on Tyr-13. Phosphoserine is present on residues Ser-18 and Ser-21. The region spanning Tyr-40 to Phe-325 is the Protein kinase domain. ATP-binding positions include Leu-46–Val-54 and Lys-69. Lys-97 carries the N6-acetyllysine modification. Catalysis depends on Asp-157, which acts as the Proton acceptor. Residue Ser-288 is modified to Phosphoserine.

This sequence belongs to the protein kinase superfamily. Ser/Thr protein kinase family. CK2 subfamily. As to quaternary structure, heterotetramer composed of two catalytic subunits (alpha chain and/or alpha' chain) and two regulatory subunits (beta chains). The tetramer can exist as a combination of 2 alpha/2 beta, 2 alpha'/2 beta or 1 alpha/1 alpha'/2 beta subunits. Also part of a CK2-SPT16-SSRP1 complex composed of SSRP1, SUPT16H, CSNK2A1, CSNK2A2 and CSNK2B, which forms following UV irradiation. Interacts with RNPS1. Interacts with CSNK2A2IP (via C-terminus). Interacts with SIRT6; preventing CSNK2A2 localization to the nucleus. Interacts with HIRIP3. Highly expressed in brain, testis and mature epididymal spermatozoa. Weakly expressed in kidney, liver, lung, spleen and thymus (at protein level).

Its subcellular location is the nucleus. It is found in the cytoplasm. The catalysed reaction is L-seryl-[protein] + ATP = O-phospho-L-seryl-[protein] + ADP + H(+). The enzyme catalyses L-threonyl-[protein] + ATP = O-phospho-L-threonyl-[protein] + ADP + H(+). With respect to regulation, constitutively active protein kinase whose activity is not directly affected by phosphorylation. Seems to be regulated by level of expression and localization. Its function is as follows. Catalytic subunit of a constitutively active serine/threonine-protein kinase complex that phosphorylates a large number of substrates containing acidic residues C-terminal to the phosphorylated serine or threonine. Regulates numerous cellular processes, such as cell cycle progression, apoptosis and transcription, as well as viral infection. May act as a regulatory node which integrates and coordinates numerous signals leading to an appropriate cellular response. During mitosis, functions as a component of the p53/TP53-dependent spindle assembly checkpoint (SAC) that maintains cyclin-B-CDK1 activity and G2 arrest in response to spindle damage. Also required for p53/TP53-mediated apoptosis, phosphorylating 'Ser-392' of p53/TP53 following UV irradiation. Phosphorylates a number of DNA repair proteins in response to DNA damage, such as MDC1, RAD9A, RAD51 and HTATSF1, promoting their recruitment to DNA damage sites. Can also negatively regulate apoptosis. Phosphorylates the caspases CASP9 and CASP2 and the apoptotic regulator NOL3. Phosphorylation protects CASP9 from cleavage and activation by CASP8, and inhibits the dimerization of CASP2 and activation of CASP8. Regulates transcription by direct phosphorylation of RNA polymerases I, II, III and IV. Also phosphorylates and regulates numerous transcription factors including NF-kappa-B, STAT1, CREB1, IRF1, IRF2, ATF1, SRF, MAX, JUN, FOS, MYC and MYB. Phosphorylates Hsp90 and its co-chaperones FKBP4 and CDC37, which is essential for chaperone function. Regulates Wnt signaling by phosphorylating CTNNB1 and the transcription factor LEF1. Acts as an ectokinase that phosphorylates several extracellular proteins. May phosphorylate histone H2A on 'Ser-1'. The chain is Casein kinase II subunit alpha' (Csnk2a2) from Mus musculus (Mouse).